The primary structure comprises 302 residues: tRNA demethylase abh1 (302 aa).

Substrate contacts are provided by residues Trp142 and 149–151; that span reads YDW. The Fe2OG dioxygenase domain maps to 187-299; the sequence is KAEAAIVNFY…RVNFNVRQVR (113 aa). 194-196 contributes to the 2-oxoglutarate binding site; the sequence is NFY. Residues His205 and Asp207 each contribute to the Fe cation site. Arg235 provides a ligand contact to substrate. His261 contributes to the Fe cation binding site. A 2-oxoglutarate-binding site is contributed by 290-296; that stretch reads RVNFNVR.

The protein belongs to the alkB family. The cofactor is Fe(2+).

Its subcellular location is the cytoplasm. It localises to the nucleus. The enzyme catalyses an N(1)-methyladenosine in tRNA + 2-oxoglutarate + O2 = an adenosine in tRNA + formaldehyde + succinate + CO2. It catalyses the reaction N(1)-methyladenosine(58) in tRNA + 2-oxoglutarate + O2 = adenosine(58) in tRNA + formaldehyde + succinate + CO2. Dioxygenase that acts as on nucleic acids, such as DNA and tRNA. Requires molecular oxygen, alpha-ketoglutarate and iron. Mainly acts as a tRNA demethylase by removing N(1)-methyladenine from various tRNAs, with a preference for N(1)-methyladenine at position 58 (m1A58) present on a stem loop structure of tRNAs. Acts as a regulator of translation initiation and elongation. Does not appear to possess DNA repair activity; no activity towards methylated DNA or etheno adducts. Exhibits a weak and unstable DNA lyase activity; this activity is probably not biologically significant and proceeds by a mechanism different from the classical dioxygenase reaction as it does not require 2-oxoglutarate or iron. This is tRNA demethylase abh1 (abh1) from Schizosaccharomyces pombe (strain 972 / ATCC 24843) (Fission yeast).